A 94-amino-acid polypeptide reads, in one-letter code: Large ribosomal subunit protein uL23 (94 aa).

Belongs to the universal ribosomal protein uL23 family. In terms of assembly, part of the 50S ribosomal subunit. Contacts protein L29, and trigger factor when it is bound to the ribosome.

Functionally, one of the early assembly proteins it binds 23S rRNA. One of the proteins that surrounds the polypeptide exit tunnel on the outside of the ribosome. Forms the main docking site for trigger factor binding to the ribosome. In Symbiobacterium thermophilum (strain DSM 24528 / JCM 14929 / IAM 14863 / T), this protein is Large ribosomal subunit protein uL23.